Consider the following 668-residue polypeptide: tRNA 5-methylaminomethyl-2-thiouridine biosynthesis bifunctional protein MnmC (668 aa).

Residues 1-245 (MKHYSIQPAN…KREMLCGVME (245 aa)) are tRNA (mnm(5)s(2)U34)-methyltransferase. The FAD-dependent cmnm(5)s(2)U34 oxidoreductase stretch occupies residues 270 to 668 (IGGGIASALL…LLKGKAVKAG (399 aa)).

In the N-terminal section; belongs to the methyltransferase superfamily. tRNA (mnm(5)s(2)U34)-methyltransferase family. It in the C-terminal section; belongs to the DAO family. Requires FAD as cofactor.

Its subcellular location is the cytoplasm. It catalyses the reaction 5-aminomethyl-2-thiouridine(34) in tRNA + S-adenosyl-L-methionine = 5-methylaminomethyl-2-thiouridine(34) in tRNA + S-adenosyl-L-homocysteine + H(+). Functionally, catalyzes the last two steps in the biosynthesis of 5-methylaminomethyl-2-thiouridine (mnm(5)s(2)U) at the wobble position (U34) in tRNA. Catalyzes the FAD-dependent demodification of cmnm(5)s(2)U34 to nm(5)s(2)U34, followed by the transfer of a methyl group from S-adenosyl-L-methionine to nm(5)s(2)U34, to form mnm(5)s(2)U34. The polypeptide is tRNA 5-methylaminomethyl-2-thiouridine biosynthesis bifunctional protein MnmC (Shigella flexneri serotype 5b (strain 8401)).